Reading from the N-terminus, the 23-residue chain is Clavanin-B (23 aa).

Phe-23 is modified (phenylalanine amide).

It is found in the secreted. Its function is as follows. Has antimicrobial activity. This is Clavanin-B from Styela clava (Sea squirt).